A 513-amino-acid chain; its full sequence is Xylose import ATP-binding protein XylG (513 aa).

ABC transporter domains follow at residues 5 to 242 and 259 to 505; these read LEMK…VGRE and LRIE…LRSE. Position 37–44 (37–44) interacts with ATP; that stretch reads GENGSGKS.

This sequence belongs to the ABC transporter superfamily. Xylose importer (TC 3.A.1.2.4) family. As to quaternary structure, the complex is composed of two ATP-binding proteins (XylG), two transmembrane proteins (XylH) and a solute-binding protein (XylF).

The protein resides in the cell inner membrane. It carries out the reaction D-xylose(out) + ATP + H2O = D-xylose(in) + ADP + phosphate + H(+). Part of the ABC transporter complex XylFGH involved in xylose import. Responsible for energy coupling to the transport system. This chain is Xylose import ATP-binding protein XylG, found in Shigella flexneri serotype 5b (strain 8401).